The chain runs to 142 residues: Transcriptional regulator MraZ (142 aa).

SpoVT-AbrB domains follow at residues 5–47 (THTP…PTET) and 76–119 (ASDT…DATE).

This sequence belongs to the MraZ family. As to quaternary structure, forms oligomers.

The protein localises to the cytoplasm. It is found in the nucleoid. In Cutibacterium acnes (strain DSM 16379 / KPA171202) (Propionibacterium acnes), this protein is Transcriptional regulator MraZ.